The sequence spans 417 residues: Histidine--tRNA ligase (417 aa).

It belongs to the class-II aminoacyl-tRNA synthetase family. In terms of assembly, homodimer.

Its subcellular location is the cytoplasm. The enzyme catalyses tRNA(His) + L-histidine + ATP = L-histidyl-tRNA(His) + AMP + diphosphate + H(+). This Acetivibrio thermocellus (strain ATCC 27405 / DSM 1237 / JCM 9322 / NBRC 103400 / NCIMB 10682 / NRRL B-4536 / VPI 7372) (Clostridium thermocellum) protein is Histidine--tRNA ligase.